The primary structure comprises 99 residues: Large ribosomal subunit protein uL23 (99 aa).

The protein belongs to the universal ribosomal protein uL23 family. In terms of assembly, part of the 50S ribosomal subunit. Contacts protein L29, and trigger factor when it is bound to the ribosome.

One of the early assembly proteins it binds 23S rRNA. One of the proteins that surrounds the polypeptide exit tunnel on the outside of the ribosome. Forms the main docking site for trigger factor binding to the ribosome. The polypeptide is Large ribosomal subunit protein uL23 (Synechococcus sp. (strain JA-2-3B'a(2-13)) (Cyanobacteria bacterium Yellowstone B-Prime)).